A 223-amino-acid polypeptide reads, in one-letter code: Deoxyribose-phosphate aldolase (223 aa).

Asp91 (proton donor/acceptor) is an active-site residue. The active-site Schiff-base intermediate with acetaldehyde is Lys154. Lys183 acts as the Proton donor/acceptor in catalysis.

The protein belongs to the DeoC/FbaB aldolase family. DeoC type 1 subfamily.

It is found in the cytoplasm. The enzyme catalyses 2-deoxy-D-ribose 5-phosphate = D-glyceraldehyde 3-phosphate + acetaldehyde. It participates in carbohydrate degradation; 2-deoxy-D-ribose 1-phosphate degradation; D-glyceraldehyde 3-phosphate and acetaldehyde from 2-deoxy-alpha-D-ribose 1-phosphate: step 2/2. Its function is as follows. Catalyzes a reversible aldol reaction between acetaldehyde and D-glyceraldehyde 3-phosphate to generate 2-deoxy-D-ribose 5-phosphate. The chain is Deoxyribose-phosphate aldolase from Lysinibacillus sphaericus (strain C3-41).